Consider the following 485-residue polypeptide: N-succinylglutamate 5-semialdehyde dehydrogenase (485 aa).

NAD(+) is bound at residue 220-225 (GSANTG). Active-site residues include glutamate 243 and cysteine 278.

It belongs to the aldehyde dehydrogenase family. AstD subfamily.

It catalyses the reaction N-succinyl-L-glutamate 5-semialdehyde + NAD(+) + H2O = N-succinyl-L-glutamate + NADH + 2 H(+). It functions in the pathway amino-acid degradation; L-arginine degradation via AST pathway; L-glutamate and succinate from L-arginine: step 4/5. In terms of biological role, catalyzes the NAD-dependent reduction of succinylglutamate semialdehyde into succinylglutamate. This is N-succinylglutamate 5-semialdehyde dehydrogenase from Vibrio vulnificus (strain YJ016).